An 89-amino-acid polypeptide reads, in one-letter code: Acyl carrier protein MbtL (89 aa).

In terms of domain architecture, Carrier spans 7–82 (ESVSAALTEI…DLEAAIQAKV (76 aa)). An O-(pantetheine 4'-phosphoryl)serine modification is found at serine 42.

Post-translationally, 4'-phosphopantetheine is transferred from CoA to a specific serine of apo-ACP, leading to the activated holo-ACP form.

It is found in the cytoplasm. Its pathway is siderophore biosynthesis; mycobactin biosynthesis. In terms of biological role, acyl carrier protein involved in the formation of acyl-S-ACP intermediates within the mycobactin biosynthesis process. In Mycobacterium sp. (strain MCS), this protein is Acyl carrier protein MbtL (mbtL).